The primary structure comprises 364 residues: Mitogen-activated protein kinase 11 (364 aa).

One can recognise a Protein kinase domain in the interval 24–308 (LQGLRPVGSG…AAEALAHAYF (285 aa)). ATP-binding positions include 30 to 38 (VGSGAYGSV) and Lys-53. Glu-71 serves as a coordination point for nilotinib. Asp-168 acts as the Proton acceptor in catalysis. Thr-180 carries the phosphothreonine; by MAP2K3, MAP2K4 and MAP2K6 modification. Positions 180-182 (TGY) match the TXY motif. Tyr-182 is subject to Phosphotyrosine; by MAP2K3, MAP2K4 and MAP2K6. Residues 312–331 (HDPDDEPEAEPYDESVEAKE) are disordered. The span at 314-326 (PDDEPEAEPYDES) shows a compositional bias: acidic residues. Tyr-323 is subject to Phosphotyrosine; by ZAP70.

It belongs to the protein kinase superfamily. CMGC Ser/Thr protein kinase family. MAP kinase subfamily. As to quaternary structure, interacts with HDAC3 and DUSP16. The cofactor is Mg(2+). Dually phosphorylated on Thr-180 and Tyr-182 by MAP2K3/MKK3, MAP2K4/MKK4 and MAP2K6/MKK6, which activates the enzyme.

It localises to the cytoplasm. The protein localises to the nucleus. The enzyme catalyses L-seryl-[protein] + ATP = O-phospho-L-seryl-[protein] + ADP + H(+). It carries out the reaction L-threonyl-[protein] + ATP = O-phospho-L-threonyl-[protein] + ADP + H(+). Its activity is regulated as follows. Activated by phosphorylation on threonine and tyrosine by MAP2K3/MKK3, MAP2K4/MKK4 and MAP2K6/MKK6. MAP2K3/MKK3 and MAP2K6/MKK6 are both essential for the activation of MAPK11 induced by environmental stress. HDAC3 interacts directly and selectively with MAPK11 to repress ATF2 transcriptional activity, and regulate TNF gene expression in LPS-stimulated cells. Inhibited by SB203580 and pyridinyl-imidazole related compounds. Its function is as follows. Serine/threonine kinase which acts as an essential component of the MAP kinase signal transduction pathway. MAPK11 is one of the four p38 MAPKs which play an important role in the cascades of cellular responses evoked by extracellular stimuli such as pro-inflammatory cytokines or physical stress leading to direct activation of transcription factors. Accordingly, p38 MAPKs phosphorylate a broad range of proteins and it has been estimated that they may have approximately 200 to 300 substrates each. MAPK11 functions are mostly redundant with those of MAPK14. Some of the targets are downstream kinases which are activated through phosphorylation and further phosphorylate additional targets. RPS6KA5/MSK1 and RPS6KA4/MSK2 can directly phosphorylate and activate transcription factors such as CREB1, ATF1, the NF-kappa-B isoform RELA/NFKB3, STAT1 and STAT3, but can also phosphorylate histone H3 and the nucleosomal protein HMGN1. RPS6KA5/MSK1 and RPS6KA4/MSK2 play important roles in the rapid induction of immediate-early genes in response to stress or mitogenic stimuli, either by inducing chromatin remodeling or by recruiting the transcription machinery. On the other hand, two other kinase targets, MAPKAPK2/MK2 and MAPKAPK3/MK3, participate in the control of gene expression mostly at the post-transcriptional level, by phosphorylating ZFP36 (tristetraprolin) and ELAVL1, and by regulating EEF2K, which is important for the elongation of mRNA during translation. MKNK1/MNK1 and MKNK2/MNK2, two other kinases activated by p38 MAPKs, regulate protein synthesis by phosphorylating the initiation factor EIF4E2. In the cytoplasm, the p38 MAPK pathway is an important regulator of protein turnover. For example, CFLAR is an inhibitor of TNF-induced apoptosis whose proteasome-mediated degradation is regulated by p38 MAPK phosphorylation. Ectodomain shedding of transmembrane proteins is regulated by p38 MAPKs as well. In response to inflammatory stimuli, p38 MAPKs phosphorylate the membrane-associated metalloprotease ADAM17. Such phosphorylation is required for ADAM17-mediated ectodomain shedding of TGF-alpha family ligands, which results in the activation of EGFR signaling and cell proliferation. Additional examples of p38 MAPK substrates are the FGFR1. FGFR1 can be translocated from the extracellular space into the cytosol and nucleus of target cells, and regulates processes such as rRNA synthesis and cell growth. FGFR1 translocation requires p38 MAPK activation. In the nucleus, many transcription factors are phosphorylated and activated by p38 MAPKs in response to different stimuli. Classical examples include ATF1, ATF2, ATF6, ELK1, PTPRH, DDIT3, TP53/p53 and MEF2C and MEF2A. The p38 MAPKs are emerging as important modulators of gene expression by regulating chromatin modifiers and remodelers. The promoters of several genes involved in the inflammatory response, such as IL6, IL8 and IL12B, display a p38 MAPK-dependent enrichment of histone H3 phosphorylation on 'Ser-10' (H3S10ph) in LPS-stimulated myeloid cells. This phosphorylation enhances the accessibility of the cryptic NF-kappa-B-binding sites marking promoters for increased NF-kappa-B recruitment. Phosphorylates methyltransferase DOT1L on 'Ser-834', 'Thr-900', 'Ser-902', 'Thr-984', 'Ser-1001', 'Ser-1009' and 'Ser-1104'. This chain is Mitogen-activated protein kinase 11 (Mapk11), found in Mus musculus (Mouse).